We begin with the raw amino-acid sequence, 34 residues long: MSDIN-like toxin proprotein 2 (34 aa).

The propeptide occupies 1–10 (MSDINTARLP). The cyclopeptide (Phe-Pro) cross-link spans 11-20 (FYQFPDFKYP). The propeptide occupies 21–34 (CVGDDIEMVLARGE).

This sequence belongs to the MSDIN fungal toxin family. Processed by the macrocyclase-peptidase enzyme POPB to yield a toxic cyclic decapeptide. POPB first removes 10 residues from the N-terminus. Conformational trapping of the remaining peptide forces the enzyme to release this intermediate rather than proceed to macrocyclization. The enzyme rebinds the remaining peptide in a different conformation and catalyzes macrocyclization of the N-terminal 10 residues.

In terms of biological role, probable toxin that belongs to the MSDIN-like toxin family responsible for a large number of food poisoning cases and deaths. In Amanita bisporigera (Destroying angel), this protein is MSDIN-like toxin proprotein 2.